Here is a 401-residue protein sequence, read N- to C-terminus: Tryptophan synthase beta chain (401 aa).

At Lys-91 the chain carries N6-(pyridoxal phosphate)lysine.

It belongs to the TrpB family. Tetramer of two alpha and two beta chains. The cofactor is pyridoxal 5'-phosphate.

It carries out the reaction (1S,2R)-1-C-(indol-3-yl)glycerol 3-phosphate + L-serine = D-glyceraldehyde 3-phosphate + L-tryptophan + H2O. The protein operates within amino-acid biosynthesis; L-tryptophan biosynthesis; L-tryptophan from chorismate: step 5/5. The beta subunit is responsible for the synthesis of L-tryptophan from indole and L-serine. The protein is Tryptophan synthase beta chain of Lactococcus lactis subsp. cremoris (strain SK11).